Here is a 311-residue protein sequence, read N- to C-terminus: Formimidoylglutamase (311 aa).

Mn(2+) is bound by residues His130, Asp155, His157, Asp159, Cys242, and Asp244.

The protein belongs to the arginase family. The cofactor is Mn(2+).

The enzyme catalyses N-formimidoyl-L-glutamate + H2O = formamide + L-glutamate. Its pathway is amino-acid degradation; L-histidine degradation into L-glutamate; L-glutamate from N-formimidoyl-L-glutamate (hydrolase route): step 1/1. Catalyzes the conversion of N-formimidoyl-L-glutamate to L-glutamate and formamide. This is Formimidoylglutamase from Staphylococcus aureus (strain MSSA476).